The chain runs to 341 residues: Methionine import ATP-binding protein MetN 3 (341 aa).

The 240-residue stretch at 2 to 241 folds into the ABC transporter domain; it reads ILLENVKKIY…PQQDITKRFV (240 aa). Residue 38-45 coordinates ATP; the sequence is GYSGAGKS.

The protein belongs to the ABC transporter superfamily. Methionine importer (TC 3.A.1.24) family. The complex is composed of two ATP-binding proteins (MetN), two transmembrane proteins (MetI) and a solute-binding protein (MetQ).

It is found in the cell membrane. The catalysed reaction is L-methionine(out) + ATP + H2O = L-methionine(in) + ADP + phosphate + H(+). The enzyme catalyses D-methionine(out) + ATP + H2O = D-methionine(in) + ADP + phosphate + H(+). Its function is as follows. Part of the ABC transporter complex MetNIQ involved in methionine import. Responsible for energy coupling to the transport system. This is Methionine import ATP-binding protein MetN 3 from Bacillus cereus (strain ZK / E33L).